An 819-amino-acid chain; its full sequence is MNEYYQPSEIEAQAQKYWEENKSFNVTEDPTKEKFYCLAMFPYPSGRLHMGHVRNYTISDVISRFHRMQGKNVLHPMGWDAFGLPAENAAIKNNTAPAKWTYSNTDYMRKQLTELGFGFDWSREVTTCKPDYYKWEQWFFTRLYEKGLAYKKVASVNWCPNDQTVLANEQVVDGQCWRCDTAVERKEIPQWFIRITDYAEELLADLDKLPNWPEQVKTMQRNWIGKSQGVEMRFDLANPIAGTTGFDVYTTRPDTLMGVTYVSLAAEHPIAKALAETNPALAAFIQECKVQSVAEADMANMEKKGIDTGIKAKHPITGDEVSVWVANYVLMDYGSGAVMAVPAHDQRDWEFAKKYDLEIKQVIAPEDGSDIDLTKEAFVDKGVLVNSGEYDGLNFNAAFEAISQTLQAANKGKVTTNFRLRDWGVSRQRYWGSPIPIFNLPDGGVIPVPADRLPVLLPEDVQMDGVQSPIKADKEWCKAELNGQAVEHETDTFDTFMESSWYYARYTSPNADSMLDPDKANYWLPVDQYVGGIEHAILHLLYARFFHKLMRDEGLVECDEPFERLLCQGMVLKDGTKMSKSKGNTVDPEDLIKTYGADTVRLFSMFAAPPEQSLEWTDSGVEGAFRFLKKLWKAVASHLEAGSAGEIDANSLDEQQKALRRKTHETISKVSDDYGRRQTFNTAIAAVMELLNEITRSADRSTPNGLAVEREALEAATLLLAPIVPHACHALWQAFGNEVAVLDAPWPTVDEAALVKDTITIVAQVNGKVRAKLDAPANADKDALEKIALADESVLKHIDGKMIRKVIVVPGKLVNIVAN.

A 'HIGH' region motif is present at residues 42-52 (PYPSGRLHMGH). The short motif at 577–581 (KMSKS) is the 'KMSKS' region element. Lysine 580 contributes to the ATP binding site.

The protein belongs to the class-I aminoacyl-tRNA synthetase family.

It localises to the cytoplasm. It carries out the reaction tRNA(Leu) + L-leucine + ATP = L-leucyl-tRNA(Leu) + AMP + diphosphate. In Saccharophagus degradans (strain 2-40 / ATCC 43961 / DSM 17024), this protein is Leucine--tRNA ligase.